Consider the following 71-residue polypeptide: MVNVLKGVLIECDPAMKQFLLYLDEANALGKKFIIQDIDDTHVFVIAELVNVLQERVGELMDQNAFSLTQK.

Phosphothreonine is present on Thr69.

Belongs to the TFB5 family. In terms of assembly, component of the 7-subunit TFIIH core complex composed of XPB/ERCC3, XPD/ERCC2, GTF2H1, GTF2H2, GTF2H3, GTF2H4 and GTF2H5, which is active in NER. The core complex associates with the 3-subunit CDK-activating kinase (CAK) module composed of CCNH/cyclin H, CDK7 and MNAT1 to form the 10-subunit holoenzyme (holo-TFIIH) active in transcription. Part of TBP-based Pol II pre-initiation complex (PIC), in which Pol II core assembles with general transcription factors and other specific initiation factors including GTF2E1, GTF2E2, GTF2F1, GTF2F2, TCEA1, ERCC2, ERCC3, GTF2H2, GTF2H3, GTF2H4, GTF2H5, GTF2A1, GTF2A2, GTF2B and TBP; this large multi-subunit PIC complex mediates DNA unwinding and targets Pol II core to the transcription start site where the first phosphodiester bond forms.

It localises to the nucleus. Its subcellular location is the cytoplasm. Its function is as follows. Component of the general transcription and DNA repair factor IIH (TFIIH) core complex, which is involved in general and transcription-coupled nucleotide excision repair (NER) of damaged DNA and, when complexed to CAK, in RNA transcription by RNA polymerase II. In NER, TFIIH acts by opening DNA around the lesion to allow the excision of the damaged oligonucleotide and its replacement by a new DNA fragment. In transcription, TFIIH has an essential role in transcription initiation. When the pre-initiation complex (PIC) has been established, TFIIH is required for promoter opening and promoter escape. Phosphorylation of the C-terminal tail (CTD) of the largest subunit of RNA polymerase II by the kinase module CAK controls the initiation of transcription. Necessary for the stability of the TFIIH complex and for the presence of normal levels of TFIIH in the cell. This chain is General transcription factor IIH subunit 5, found in Mus musculus (Mouse).